Consider the following 468-residue polypeptide: Sorting and assembly machinery component 50 homolog B (468 aa).

The tract at residues 1 to 25 is disordered; the sequence is MGTVHARSLDPLPMNGPDFGSPDDA. One can recognise a POTRA domain in the interval 44 to 124; the sequence is VVVQRVHFEG…LDVTFEVTEL (81 aa).

Belongs to the SAM50/omp85 family. In terms of assembly, associates with the mitochondrial contact site and cristae organizing system (MICOS) complex (also known as MINOS or MitOS complex).

It is found in the mitochondrion outer membrane. Functionally, may play a role in the maintenance of the structure of mitochondrial cristae. This chain is Sorting and assembly machinery component 50 homolog B (samm50-b), found in Xenopus laevis (African clawed frog).